The sequence spans 155 residues: Ribosomal RNA large subunit methyltransferase H (155 aa).

S-adenosyl-L-methionine-binding positions include leucine 72, glycine 103, and 122-127; that span reads LSPLTL.

The protein belongs to the RNA methyltransferase RlmH family. Homodimer.

The protein resides in the cytoplasm. The catalysed reaction is pseudouridine(1915) in 23S rRNA + S-adenosyl-L-methionine = N(3)-methylpseudouridine(1915) in 23S rRNA + S-adenosyl-L-homocysteine + H(+). Functionally, specifically methylates the pseudouridine at position 1915 (m3Psi1915) in 23S rRNA. The protein is Ribosomal RNA large subunit methyltransferase H of Aeromonas salmonicida (strain A449).